The following is a 218-amino-acid chain: Small ribosomal subunit protein uS3c (218 aa).

The 72-residue stretch at 47 to 118 (VQKNMRTSSG…KLNIAVTRIA (72 aa)) folds into the KH type-2 domain.

Belongs to the universal ribosomal protein uS3 family. Part of the 30S ribosomal subunit.

It is found in the plastid. The protein resides in the chloroplast. The chain is Small ribosomal subunit protein uS3c (rps3) from Solanum lycopersicum (Tomato).